The primary structure comprises 1337 residues: C-Jun-amino-terminal kinase-interacting protein 3 (1337 aa).

Residues 12-100 enclose the RH1 domain; the sequence is VVVYQDDYCS…LTQYEREKAL (89 aa). The interval 50 to 80 is kinesin-binding domain (KBD); essential for its function in axon elongation; it reads EVVKELMPLVVNVLENLDSVLSENQEHEVEL. The stretch at 58 to 177 forms a coiled coil; the sequence is LVVNVLENLD…HTEMIQTYVE (120 aa). Disordered regions lie at residues 183-211 and 245-285; these read KMQQ…SLNV and SSSY…PSAA. Over residues 184–198 the composition is skewed to polar residues; the sequence is MQQVGGSGQTESSLP. Residues 210 to 226 are JNK-binding domain (JBD); essential for its function in axon elongation; that stretch reads NVFPLADGMVRAQMGGK. A compositionally biased stretch (low complexity) spans 261–270; it reads SSAAATPSTT. Phosphothreonine; by MAPK occurs at positions 266, 276, and 287. Polar residues predominate over residues 271 to 282; sequence GTKSNTPTSSVP. Phosphoserine; by ROCK1 is present on residues Ser-315 and Ser-365. A Phosphoserine modification is found at Ser-366. Residues 424–459 are leucine zipper-like domain (LZ); essential for its function in axon elongation; sequence LLLENSQLLETKNALNVVKNDLIAKVDQLSGEQEVL. Residues 437–555 adopt a coiled-coil conformation; it reads ALNVVKNDLI…LQEAVRWTEM (119 aa). The interaction with NTRK2 stretch occupies residues 459–515; sequence LKGELEAAKQAKVKLENRIKELEEELKRVKSEAVTARREPREEVEDVSSYLCTELDK. One can recognise an RH2 domain in the interval 521 to 595; sequence RRRFTRVEMA…SPPPAKRSYP (75 aa). Ser-603 carries the phosphoserine modification. The tract at residues 633–655 is disordered; the sequence is DDCTSSARREQKREQYRQVREHV. A compositionally biased stretch (basic and acidic residues) spans 639–655; that stretch reads ARREQKREQYRQVREHV. Residue Ser-677 is modified to Phosphoserine. Disordered regions lie at residues 719–772 and 859–966; these read WKPH…ATSS and PRSN…TTTS. Over residues 739–765 the composition is skewed to basic and acidic residues; the sequence is LTCDREGEGEPKSTHPSPEKKKAKETP. Polar residues-rich tracts occupy residues 879–892 and 941–952; these read VATT…PSQS and ENGSESNGTIVQ.

The protein belongs to the JIP scaffold family. Forms homo- or heterooligomeric complexes. The central region of MAPK8IP3 interacts with the C-terminal of MAPK8IP2 but not MAPK8IP1. Binds specific components of the JNK signaling pathway namely MAPK8/JNK1, MAPK9/JNK2 and MAPK10/JNK3 to the N-terminal region, MAP2K4/MKK4 and MAP2K7/MKK7 to the central region and MAP3K11 to the C-terminal region. Binds the TPR motif-containing C-terminal of kinesin light chain, KLC1. Pre-assembled MAPK8IP1 scaffolding complexes are then transported as a cargo of kinesin, to the required subcellular location. Interacts with ROCK1 and this interaction is enhanced by ultraviolet-B (UVB) radiation. Interacts with SH3RF2. Interacts with NTRK2/TRKB and NTRK3/TRKC. Phosphorylation by ROCK1 is crucial for the recruitment of JNK. Highly expressed throughout many regions of the brain and at lower levels in the heart, liver, lung, testes and kidney. All isoforms have been identified in the brain, isoform 1a is also expressed in the spleen and lung.

The protein localises to the cytoplasm. It localises to the golgi apparatus. The protein resides in the cytoplasmic vesicle. Its subcellular location is the cell projection. It is found in the growth cone. The protein localises to the axon. It localises to the dendrite. The protein resides in the perinuclear region. Its function is as follows. The JNK-interacting protein (JIP) group of scaffold proteins selectively mediates JNK signaling by aggregating specific components of the MAPK cascade to form a functional JNK signaling module. May function as a regulator of vesicle transport, through interactions with the JNK-signaling components and motor proteins. Promotes neuronal axon elongation in a kinesin- and JNK-dependent manner. Activates cofilin at axon tips via local activation of JNK, thereby regulating filopodial dynamics and enhancing axon elongation. Its binding to kinesin heavy chains (KHC), promotes kinesin-1 motility along microtubules and is essential for axon elongation and regeneration. Regulates cortical neuronal migration by mediating NTRK2/TRKB anterograde axonal transport during brain development. Acts as an adapter that bridges the interaction between NTRK2/TRKB and KLC1 and drives NTRK2/TRKB axonal but not dendritic anterograde transport, which is essential for subsequent BDNF-triggered signaling and filopodia formation. The protein is C-Jun-amino-terminal kinase-interacting protein 3 (Mapk8ip3) of Mus musculus (Mouse).